The sequence spans 431 residues: Histidinol dehydrogenase (431 aa).

Residues Tyr-127, Gln-185, and Asn-208 each contribute to the NAD(+) site. Residues Ser-234, Gln-256, and His-259 each contribute to the substrate site. Residues Gln-256 and His-259 each contribute to the Zn(2+) site. Active-site proton acceptor residues include Glu-323 and His-324. His-324, Asp-357, Glu-411, and His-416 together coordinate substrate. Asp-357 contributes to the Zn(2+) binding site. His-416 contacts Zn(2+).

The protein belongs to the histidinol dehydrogenase family. Requires Zn(2+) as cofactor.

The catalysed reaction is L-histidinol + 2 NAD(+) + H2O = L-histidine + 2 NADH + 3 H(+). It functions in the pathway amino-acid biosynthesis; L-histidine biosynthesis; L-histidine from 5-phospho-alpha-D-ribose 1-diphosphate: step 9/9. Catalyzes the sequential NAD-dependent oxidations of L-histidinol to L-histidinaldehyde and then to L-histidine. The sequence is that of Histidinol dehydrogenase from Vibrio vulnificus (strain CMCP6).